Consider the following 314-residue polypeptide: Cytochrome f (314 aa).

A signal peptide spans 1–29; sequence MTRSISISVLIISVLIMIYVITRTSISNA. Heme is bound by residues Tyr-30, Cys-50, Cys-53, and His-54. The chain crosses the membrane as a helical span at residues 280 to 300; the sequence is VQGLLFFLASVILAQIFLVLK.

Belongs to the cytochrome f family. In terms of assembly, the 4 large subunits of the cytochrome b6-f complex are cytochrome b6, subunit IV (17 kDa polypeptide, petD), cytochrome f and the Rieske protein, while the 4 small subunits are PetG, PetL, PetM and PetN. The complex functions as a dimer. The cofactor is heme.

The protein resides in the plastid. Its subcellular location is the chloroplast thylakoid membrane. Its function is as follows. Component of the cytochrome b6-f complex, which mediates electron transfer between photosystem II (PSII) and photosystem I (PSI), cyclic electron flow around PSI, and state transitions. In Illicium oligandrum (Star anise), this protein is Cytochrome f.